A 464-amino-acid chain; its full sequence is Soluble pyridine nucleotide transhydrogenase (464 aa).

Residue 35-44 (DDRRQVGGNC) coordinates FAD.

This sequence belongs to the class-I pyridine nucleotide-disulfide oxidoreductase family. FAD is required as a cofactor.

It localises to the cytoplasm. The enzyme catalyses NAD(+) + NADPH = NADH + NADP(+). Conversion of NADPH, generated by peripheral catabolic pathways, to NADH, which can enter the respiratory chain for energy generation. This Pseudomonas putida (strain GB-1) protein is Soluble pyridine nucleotide transhydrogenase.